The primary structure comprises 321 residues: uncharacterized protein (321 aa).

The active-site Proton donor is the Tyr-49. His-106 serves as a coordination point for substrate.

The protein belongs to the aldo/keto reductase family.

This is an uncharacterized protein from Caenorhabditis elegans.